Here is a 174-residue protein sequence, read N- to C-terminus: Co-chaperone protein HscB homolog (174 aa).

Residues 2 to 74 (NYFELFSFTP…ILRAEHMLSL (73 aa)) form the J domain.

This sequence belongs to the HscB family. As to quaternary structure, interacts with HscA and stimulates its ATPase activity.

Its function is as follows. Co-chaperone involved in the maturation of iron-sulfur cluster-containing proteins. Seems to help targeting proteins to be folded toward HscA. In Shewanella woodyi (strain ATCC 51908 / MS32), this protein is Co-chaperone protein HscB homolog.